The chain runs to 356 residues: Riboflavin biosynthesis protein RibD (356 aa).

The deaminase stretch occupies residues 1-148 (MIREIDKNYM…EDFFTYITQE (148 aa)). In terms of domain architecture, CMP/dCMP-type deaminase spans 4 to 126 (EIDKNYMKLA…KLRNAGIEVD (123 aa)). Residue histidine 53 coordinates Zn(2+). Glutamate 55 functions as the Proton donor in the catalytic mechanism. Cysteine 78 and cysteine 87 together coordinate Zn(2+). Residues 149-356 (RPYITLKWAQ…EDLVIFFKRY (208 aa)) are reductase. Alanine 157 is an NADP(+) binding site. Serine 171 lines the substrate pocket. Tryptophan 173 provides a ligand contact to NADP(+). Arginine 187 provides a ligand contact to substrate. Positions 199 and 203 each coordinate NADP(+). The substrate site is built by leucine 207, arginine 210, and glutamate 290. Residue 292-298 (GPRTLTS) coordinates NADP(+).

The protein in the N-terminal section; belongs to the cytidine and deoxycytidylate deaminase family. This sequence in the C-terminal section; belongs to the HTP reductase family. It depends on Zn(2+) as a cofactor.

The enzyme catalyses 2,5-diamino-6-hydroxy-4-(5-phosphoribosylamino)-pyrimidine + H2O + H(+) = 5-amino-6-(5-phospho-D-ribosylamino)uracil + NH4(+). The catalysed reaction is 5-amino-6-(5-phospho-D-ribitylamino)uracil + NADP(+) = 5-amino-6-(5-phospho-D-ribosylamino)uracil + NADPH + H(+). Its pathway is cofactor biosynthesis; riboflavin biosynthesis; 5-amino-6-(D-ribitylamino)uracil from GTP: step 2/4. It participates in cofactor biosynthesis; riboflavin biosynthesis; 5-amino-6-(D-ribitylamino)uracil from GTP: step 3/4. Functionally, converts 2,5-diamino-6-(ribosylamino)-4(3h)-pyrimidinone 5'-phosphate into 5-amino-6-(ribosylamino)-2,4(1h,3h)-pyrimidinedione 5'-phosphate. The chain is Riboflavin biosynthesis protein RibD (ribD) from Aquifex aeolicus (strain VF5).